We begin with the raw amino-acid sequence, 242 residues long: Triosephosphate isomerase (242 aa).

8 to 10 (NWK) serves as a coordination point for substrate. Residue His98 is the Electrophile of the active site. The active-site Proton acceptor is the Glu167. Substrate-binding positions include Gly173, Ser205, and 226 to 227 (GG).

Belongs to the triosephosphate isomerase family. Homodimer.

Its subcellular location is the cytoplasm. The catalysed reaction is D-glyceraldehyde 3-phosphate = dihydroxyacetone phosphate. The protein operates within carbohydrate biosynthesis; gluconeogenesis. It participates in carbohydrate degradation; glycolysis; D-glyceraldehyde 3-phosphate from glycerone phosphate: step 1/1. Its function is as follows. Involved in the gluconeogenesis. Catalyzes stereospecifically the conversion of dihydroxyacetone phosphate (DHAP) to D-glyceraldehyde-3-phosphate (G3P). The polypeptide is Triosephosphate isomerase (Mesomycoplasma hyopneumoniae (strain 7448) (Mycoplasma hyopneumoniae)).